Consider the following 509-residue polypeptide: MVLWILWRPFGFSRRLLKLERHSITESKSLIPLAWTSLTQTLSESPGIFLLGQRKRFSTMPEIETHEGDSELFSPPSDVRGMTKLDRTAFKKTVNIPVLKVRKEIVSRLMRSLRRAALQRPGIKRVIEDPEDKESRLILLDPYKIFTHDSFEKAGLSVLEQLNVSPQISKYNLELTYENFKSEEILRAVLPEGQDVTSGFSRVGHIAHLNLRDHQLPFKQLIGQVMIDKNPGITSAVNKINNIDNMYRNFHMEVLSGEQNMMTKVRENKYTYEFDFSKVYWNPRLSTEHSRITELLKAGDVLFDVFAGVGPFAIPVAKKNCTVFANDLNPESHKWLLHNCKLNKVDQKVKIFNLDGKDFLQGPVKEELIQLLSLSKERKPSVHIVMNLPAKAIEFLSAFKWLLDGQPCSNEFLPIVHCYSFSKDANPAKDVRQRAGAVLGISLEACSSVHLVRNVAPNKEMLCITFQIPAAVLYKNQTKNPENHEDPPLKRQRTAEAFSDEKTQIASNT.

Residues Met-1–Phe-57 constitute a mitochondrion transit peptide. S-adenosyl-L-methionine is bound by residues His-289, Asp-327–Leu-328, Asp-355–Gly-356, and Asn-387. Residues Thr-478–Thr-509 form a disordered region.

This sequence belongs to the class I-like SAM-binding methyltransferase superfamily. TRM5/TYW2 family. As to quaternary structure, monomer.

It is found in the mitochondrion matrix. It localises to the nucleus. Its subcellular location is the cytoplasm. It carries out the reaction guanosine(37) in tRNA + S-adenosyl-L-methionine = N(1)-methylguanosine(37) in tRNA + S-adenosyl-L-homocysteine + H(+). Functionally, involved in mitochondrial tRNA methylation. Specifically methylates the N1 position of guanosine-37 in various tRNAs. Methylation is not dependent on the nature of the nucleoside 5' of the target nucleoside. This is the first step in the biosynthesis of wybutosine (yW), a modified base adjacent to the anticodon of tRNAs and required for accurate decoding. The protein is tRNA (guanine(37)-N(1))-methyltransferase of Macaca fascicularis (Crab-eating macaque).